Here is a 929-residue protein sequence, read N- to C-terminus: Protein unc-45 homolog A (929 aa).

TPR repeat units lie at residues 6–39 (VEQL…DATP), 43–76 (AVLH…DGGD), and 77–110 (VKAL…EPKN). Residue K55 is modified to N6-acetyllysine. The residue at position 468 (K468) is an N6-acetyllysine.

Interacts with PGR isoforms A and B as well as with NR3C1 in the absence of ligand, and with HSP90AB1. Binding to HSP90AB1 involves 2 UNC45A monomers per HSP90AB1 dimer.

It localises to the cytoplasm. It is found in the perinuclear region. Its subcellular location is the nucleus. May act as co-chaperone for HSP90 (Potential). Prevents the stimulation of HSP90AB1 ATPase activity by AHSA1. Positive factor in promoting PGR function in the cell. May be necessary for proper folding of myosin (Potential). Necessary for normal cell proliferation. Necessary for normal myotube formation and myosin accumulation during muscle cell development. May play a role in erythropoiesis in stroma cells in the spleen. The protein is Protein unc-45 homolog A (UNC45A) of Pongo abelii (Sumatran orangutan).